Reading from the N-terminus, the 257-residue chain is UPF0246 protein Mpe_A2092 (257 aa).

The protein belongs to the UPF0246 family.

In Methylibium petroleiphilum (strain ATCC BAA-1232 / LMG 22953 / PM1), this protein is UPF0246 protein Mpe_A2092.